We begin with the raw amino-acid sequence, 238 residues long: Ribonuclease PH (238 aa).

Residues Arg86 and Gly124–Arg126 contribute to the phosphate site.

It belongs to the RNase PH family. Homohexameric ring arranged as a trimer of dimers.

The enzyme catalyses tRNA(n+1) + phosphate = tRNA(n) + a ribonucleoside 5'-diphosphate. Its function is as follows. Phosphorolytic 3'-5' exoribonuclease that plays an important role in tRNA 3'-end maturation. Removes nucleotide residues following the 3'-CCA terminus of tRNAs; can also add nucleotides to the ends of RNA molecules by using nucleoside diphosphates as substrates, but this may not be physiologically important. Probably plays a role in initiation of 16S rRNA degradation (leading to ribosome degradation) during starvation. This Nitrosospira multiformis (strain ATCC 25196 / NCIMB 11849 / C 71) protein is Ribonuclease PH.